The following is a 154-amino-acid chain: Myoglobin (154 aa).

Residues 2–148 (GLSDGEWQLV…FRNDMAAKYK (147 aa)) enclose the Globin domain. Residue Ser4 is modified to Phosphoserine. Position 65 (His65) interacts with nitrite. His65 is a binding site for O2. Position 68 is a phosphothreonine (Thr68). His94 is a heme b binding site.

The protein belongs to the globin family. In terms of assembly, monomeric.

The protein localises to the cytoplasm. The protein resides in the sarcoplasm. The enzyme catalyses Fe(III)-heme b-[protein] + nitric oxide + H2O = Fe(II)-heme b-[protein] + nitrite + 2 H(+). The catalysed reaction is H2O2 + AH2 = A + 2 H2O. Its function is as follows. Monomeric heme protein which primary function is to store oxygen and facilitate its diffusion within muscle tissues. Reversibly binds oxygen through a pentacoordinated heme iron and enables its timely and efficient release as needed during periods of heightened demand. Depending on the oxidative conditions of tissues and cells, and in addition to its ability to bind oxygen, it also has a nitrite reductase activity whereby it regulates the production of bioactive nitric oxide. Under stress conditions, like hypoxia and anoxia, it also protects cells against reactive oxygen species thanks to its pseudoperoxidase activity. The polypeptide is Myoglobin (MB) (Ochotona princeps (Southern American pika)).